We begin with the raw amino-acid sequence, 138 residues long: Ribulose bisphosphate carboxylase small subunit (138 aa).

This sequence belongs to the RuBisCO small chain family. Heterohexadecamer of 8 large and 8 small subunits.

The protein localises to the plastid. It localises to the chloroplast. Functionally, ruBisCO catalyzes two reactions: the carboxylation of D-ribulose 1,5-bisphosphate, the primary event in carbon dioxide fixation, as well as the oxidative fragmentation of the pentose substrate in the photorespiration process. Both reactions occur simultaneously and in competition at the same active site. Although the small subunit is not catalytic it is essential for maximal activity. The chain is Ribulose bisphosphate carboxylase small subunit from Pyropia dentata (Red alga).